Consider the following 540-residue polypeptide: Arylsulfatase K (540 aa).

The signal sequence occupies residues 1–22 (MLLLWVSVVAASALAAPAPGAD). The Ca(2+) site is built by Asp44 and Cys84. Cys84 serves as the catalytic Nucleophile. Residue Cys84 is modified to 3-oxoalanine (Cys). Asn112 is a glycosylation site (N-linked (GlcNAc...) asparagine). Lys132 provides a ligand contact to substrate. Asn197 carries an N-linked (GlcNAc...) asparagine glycan. His255 contributes to the substrate binding site. An N-linked (GlcNAc...) asparagine glycan is attached at Asn266. Positions 317 and 318 each coordinate Ca(2+). N-linked (GlcNAc...) asparagine glycosylation is found at Asn379, Asn417, and Asn502.

It belongs to the sulfatase family. Ca(2+) is required as a cofactor. The conversion to 3-oxoalanine (also known as C-formylglycine, FGly), of a serine or cysteine residue in prokaryotes and of a cysteine residue in eukaryotes, is critical for catalytic activity. Post-translationally, the 75-kDa precursor undergoes proteolytic processing to yield a 23 kDa form. In terms of processing, N-glycosylated with both high mannose and complex type sugars.

It localises to the secreted. It is found in the lysosome. The enzyme catalyses an aryl sulfate + H2O = a phenol + sulfate + H(+). The catalysed reaction is Hydrolysis of the 2-sulfate groups of the 2-O-sulfo-D-glucuronate residues of chondroitin sulfate, heparin and heparitin sulfate.. Its function is as follows. Catalyzes the hydrolysis of pseudosubstrates such as p-nitrocatechol sulfate and p-nitrophenyl sulfate. Catalyzes the hydrolysis of the 2-sulfate groups of the 2-O-sulfo-D-glucuronate residues of chondroitin sulfate, heparin and heparitin sulfate. Acts selectively on 2-sulfoglucuronate and lacks activity against 2-sulfoiduronate. The polypeptide is Arylsulfatase K (ARSK) (Bos taurus (Bovine)).